We begin with the raw amino-acid sequence, 152 residues long: Large-conductance mechanosensitive channel (152 aa).

The next 3 membrane-spanning stretches (helical) occupy residues 21–41 (IDLAVGVIIGAAFGKIVDSLV), 44–64 (VVMPLVNFILGGSVDFSNKFL), and 92–112 (GNFITIIINFVLLAFVIFWMV).

This sequence belongs to the MscL family. As to quaternary structure, homopentamer.

Its subcellular location is the cell inner membrane. Functionally, channel that opens in response to stretch forces in the membrane lipid bilayer. May participate in the regulation of osmotic pressure changes within the cell. The sequence is that of Large-conductance mechanosensitive channel from Bordetella bronchiseptica (strain ATCC BAA-588 / NCTC 13252 / RB50) (Alcaligenes bronchisepticus).